A 103-amino-acid chain; its full sequence is Large ribosomal subunit protein bL21 (103 aa).

The protein belongs to the bacterial ribosomal protein bL21 family. In terms of assembly, part of the 50S ribosomal subunit. Contacts protein L20.

Functionally, this protein binds to 23S rRNA in the presence of protein L20. The sequence is that of Large ribosomal subunit protein bL21 from Parvibaculum lavamentivorans (strain DS-1 / DSM 13023 / NCIMB 13966).